The chain runs to 214 residues: External core antigen (214 aa).

An N-terminal signal peptide occupies residues 1-19 (MQLFHLCLIISCTCPTFQA). Residues 25 to 27 (GWL) are HBEAG. Residues 165-214 (NAPILSTLPETTVVRRRDRGRSPRRRTPSPRRRRSQSPRRRRSQSRESQC) form a disordered region. Basic residues predominate over residues 178–207 (VRRRDRGRSPRRRTPSPRRRRSQSPRRRRS). Residues 186-192 (SPRRRTP) form a 1; half-length repeat. The 3 X 8 AA repeats of S-P-R-R-R-R-S-Q stretch occupies residues 186–208 (SPRRRTPSPRRRRSQSPRRRRSQ). Positions 186-214 (SPRRRTPSPRRRRSQSPRRRRSQSRESQC) are excised as a propeptide. A run of 2 repeats spans residues 193 to 200 (SPRRRRSQ) and 201 to 208 (SPRRRRSQ).

The protein belongs to the orthohepadnavirus precore antigen family. In terms of assembly, homodimerizes. In terms of processing, phosphorylated. Cleaved by host furin.

The protein localises to the secreted. Its subcellular location is the host nucleus. In terms of biological role, may regulate immune response to the intracellular capsid in acting as a T-cell tolerogen, by having an immunoregulatory effect which prevents destruction of infected cells by cytotoxic T-cells. This immune regulation may predispose to chronicity during perinatal infections and prevent severe liver injury during adult infections. The polypeptide is External core antigen (Homo sapiens (Human)).